The primary structure comprises 691 residues: Dipeptidyl-peptidase 5 (691 aa).

The signal sequence occupies residues 1–20 (MKRTILSLLAAVSLAIPVYA). Active-site charge relay system residues include Ser549, Asp634, and His666.

It belongs to the peptidase S9C family. As to quaternary structure, homodimer.

It localises to the periplasm. In terms of biological role, catalyzes the removal of dipeptides from the N-terminus of oligopeptides. Prefers Ala and hydrophobic residues at the P1 position, and has no preference for P2 residues. Shows the highest dipeptidyl peptidase activity toward the synthetic substrate Lys-Ala-methylcoumaryl-7-amide (Lys-Ala-MCA). Is likely involved in amino acid metabolism and bacterial growth/survival of asaccharolytic P.endodontalis, that utilizes amino acids from extracellular proteinaceous nutrients as energy and carbon sources. In Porphyromonas endodontalis (strain ATCC 35406 / DSM 24491 / JCM 8526 / CCUG 16442 / BCRC 14492 / NCTC 13058 / HG 370) (Bacteroides endodontalis), this protein is Dipeptidyl-peptidase 5.